Here is a 56-residue protein sequence, read N- to C-terminus: UPF0391 membrane protein Jann_3570 (56 aa).

Helical transmembrane passes span 4–24 (WAVTFLIIALIAALFGFGGIA) and 29–48 (GIAQILFFVFIALFAISLVA).

Belongs to the UPF0391 family.

Its subcellular location is the cell membrane. The protein is UPF0391 membrane protein Jann_3570 of Jannaschia sp. (strain CCS1).